We begin with the raw amino-acid sequence, 337 residues long: Glyceraldehyde-3-phosphate dehydrogenase (337 aa).

NAD(+)-binding positions include 12 to 13 (RI), D34, and R79. Residues 150–152 (SCT), T181, 210–211 (TG), and R233 each bind D-glyceraldehyde 3-phosphate. Residue C151 is the Nucleophile of the active site. NAD(+) is bound at residue N315.

The protein belongs to the glyceraldehyde-3-phosphate dehydrogenase family. As to quaternary structure, homotetramer.

The protein resides in the cytoplasm. It carries out the reaction D-glyceraldehyde 3-phosphate + phosphate + NAD(+) = (2R)-3-phospho-glyceroyl phosphate + NADH + H(+). It participates in carbohydrate degradation; glycolysis; pyruvate from D-glyceraldehyde 3-phosphate: step 1/5. In Coccidioides posadasii (strain C735) (Valley fever fungus), this protein is Glyceraldehyde-3-phosphate dehydrogenase (GPD).